A 146-amino-acid chain; its full sequence is Protein U1 (146 aa).

The protein belongs to the nanovirus U1 protein family.

The polypeptide is Protein U1 (DNA-U1) (Subterranean clover stunt virus (strain F) (SCSV)).